Here is an 80-residue protein sequence, read N- to C-terminus: Protein FAM229B (80 aa).

Residues 1 to 44 (MPFRFGTQPRRFPVEGGDSSIGLEPGLSSSATCNGKEMSPTRQL) form a disordered region.

This sequence belongs to the FAM229 family.

The chain is Protein FAM229B (FAM229B) from Bos taurus (Bovine).